Consider the following 384-residue polypeptide: Methylthioribose-1-phosphate isomerase (384 aa).

Residue Asp-255 is the Proton donor of the active site.

It belongs to the eIF-2B alpha/beta/delta subunits family. MtnA subfamily.

It is found in the cytoplasm. Its subcellular location is the nucleus. It catalyses the reaction 5-(methylsulfanyl)-alpha-D-ribose 1-phosphate = 5-(methylsulfanyl)-D-ribulose 1-phosphate. The protein operates within amino-acid biosynthesis; L-methionine biosynthesis via salvage pathway; L-methionine from S-methyl-5-thio-alpha-D-ribose 1-phosphate: step 1/6. Catalyzes the interconversion of methylthioribose-1-phosphate (MTR-1-P) into methylthioribulose-1-phosphate (MTRu-1-P). This chain is Methylthioribose-1-phosphate isomerase (mri1), found in Talaromyces stipitatus (strain ATCC 10500 / CBS 375.48 / QM 6759 / NRRL 1006) (Penicillium stipitatum).